We begin with the raw amino-acid sequence, 319 residues long: Cytochrome f (319 aa).

An N-terminal signal peptide occupies residues 1–35; the sequence is MFQQMQKISLKLLKTTFLFLFATFILVGLPSTSQA. Positions 36, 56, 59, and 60 each coordinate heme. The helical transmembrane segment at 285 to 305 threads the bilayer; it reads IQGLIAFFISVIIAQTFLVLK.

It belongs to the cytochrome f family. As to quaternary structure, the 4 large subunits of the cytochrome b6-f complex are cytochrome b6, subunit IV (17 kDa polypeptide, petD), cytochrome f and the Rieske protein, while the 4 small subunits are PetG, PetL, PetM and PetN. The complex functions as a dimer. Requires heme as cofactor.

It is found in the plastid. It localises to the chloroplast thylakoid membrane. In terms of biological role, component of the cytochrome b6-f complex, which mediates electron transfer between photosystem II (PSII) and photosystem I (PSI), cyclic electron flow around PSI, and state transitions. This is Cytochrome f from Chlorokybus atmophyticus (Soil alga).